A 216-amino-acid polypeptide reads, in one-letter code: 3-isopropylmalate dehydratase small subunit (216 aa).

It belongs to the LeuD family. LeuD type 1 subfamily. Heterodimer of LeuC and LeuD.

It carries out the reaction (2R,3S)-3-isopropylmalate = (2S)-2-isopropylmalate. Its pathway is amino-acid biosynthesis; L-leucine biosynthesis; L-leucine from 3-methyl-2-oxobutanoate: step 2/4. Functionally, catalyzes the isomerization between 2-isopropylmalate and 3-isopropylmalate, via the formation of 2-isopropylmaleate. This Psychrobacter arcticus (strain DSM 17307 / VKM B-2377 / 273-4) protein is 3-isopropylmalate dehydratase small subunit.